A 149-amino-acid chain; its full sequence is Calmodulin-2 (149 aa).

EF-hand domains follow at residues 8–43, 44–79, 81–116, and 117–149; these read DQIS…LGQN, PTEA…KMKD, DSEE…LGEK, and LTDE…MMAK. Ca(2+) contacts are provided by aspartate 21, aspartate 23, aspartate 25, cysteine 27, glutamate 32, aspartate 57, aspartate 59, asparagine 61, threonine 63, glutamate 68, aspartate 94, aspartate 96, asparagine 98, glutamate 105, aspartate 130, aspartate 132, aspartate 134, glutamine 136, and glutamate 141.

This sequence belongs to the calmodulin family. Interacts with KCBP and CIP111. Binds to IQD1 and IQD20.

Its subcellular location is the cytoplasm. It is found in the cytoskeleton. Its function is as follows. Calmodulin mediates the control of a large number of enzymes, ion channels and other proteins by Ca(2+). Among the enzymes to be stimulated by the calmodulin-Ca(2+) complex are a number of protein kinases and phosphatases. This is Calmodulin-2 (CAM2) from Arabidopsis thaliana (Mouse-ear cress).